We begin with the raw amino-acid sequence, 494 residues long: tRNA (guanine(37)-N(1))-methyltransferase (494 aa).

Residues 1–32 constitute a mitochondrion transit peptide; that stretch reads MRIRRILYFYGNLPNTYTANVLRRLAFSCWHT. S-adenosyl-L-methionine contacts are provided by residues histidine 278, 316 to 317, 344 to 345, and asparagine 377; these read DL and DG. A disordered region spans residues 468-494; sequence DTGEPESKRPRTAEAFPLPHVQQSRNS.

It belongs to the class I-like SAM-binding methyltransferase superfamily. TRM5/TYW2 family. As to quaternary structure, monomer.

It localises to the mitochondrion matrix. The protein localises to the nucleus. The protein resides in the cytoplasm. The catalysed reaction is guanosine(37) in tRNA + S-adenosyl-L-methionine = N(1)-methylguanosine(37) in tRNA + S-adenosyl-L-homocysteine + H(+). Functionally, involved in mitochondrial tRNA methylation. Specifically methylates the N1 position of guanosine-37 in various tRNAs. Methylation is not dependent on the nature of the nucleoside 5' of the target nucleoside. This is the first step in the biosynthesis of wybutosine (yW), a modified base adjacent to the anticodon of tRNAs and required for accurate decoding. The sequence is that of tRNA (guanine(37)-N(1))-methyltransferase (trmt5) from Xenopus tropicalis (Western clawed frog).